The chain runs to 277 residues: Large ribosomal subunit protein uL2 (277 aa).

The interval 212–277 (RWRGKRPHVR…KFIVRGRKSK (66 aa)) is disordered. The segment covering 254 to 277 (TAGKKTRDKKKASTKFIVRGRKSK) has biased composition (basic residues).

The protein belongs to the universal ribosomal protein uL2 family. Part of the 50S ribosomal subunit. Forms a bridge to the 30S subunit in the 70S ribosome.

One of the primary rRNA binding proteins. Required for association of the 30S and 50S subunits to form the 70S ribosome, for tRNA binding and peptide bond formation. It has been suggested to have peptidyltransferase activity; this is somewhat controversial. Makes several contacts with the 16S rRNA in the 70S ribosome. The chain is Large ribosomal subunit protein uL2 from Leuconostoc mesenteroides subsp. mesenteroides (strain ATCC 8293 / DSM 20343 / BCRC 11652 / CCM 1803 / JCM 6124 / NCDO 523 / NBRC 100496 / NCIMB 8023 / NCTC 12954 / NRRL B-1118 / 37Y).